The following is a 423-amino-acid chain: SH2 domain-containing protein 5 (423 aa).

The PID domain occupies 28 to 146 (AQYVGSFPVD…LLCRSFQLAY (119 aa)). In terms of domain architecture, SH2 spans 296 to 392 (WAFAGISRPC…LDMGRLNPTY (97 aa)). The disordered stretch occupies residues 392 to 423 (YEEQDCGPPGRPPRTLRPLSHAKSEAELQGLG).

Interacts with BCR.

The protein localises to the postsynaptic density. Functionally, may be involved in synaptic plasticity regulation through the control of Rac-GTP levels. This chain is SH2 domain-containing protein 5, found in Homo sapiens (Human).